Reading from the N-terminus, the 20-residue chain is Phosphoglycerate kinase (20 aa).

The segment at 1–20 (MNKKSIRNVNLKGKRVFDRV) is disordered.

Belongs to the phosphoglycerate kinase family. Monomer.

The protein resides in the cytoplasm. It catalyses the reaction (2R)-3-phosphoglycerate + ATP = (2R)-3-phospho-glyceroyl phosphate + ADP. The protein operates within carbohydrate degradation; glycolysis; pyruvate from D-glyceraldehyde 3-phosphate: step 2/5. This chain is Phosphoglycerate kinase, found in Bacillus cereus.